Here is a 152-residue protein sequence, read N- to C-terminus: Xanthine-guanine phosphoribosyltransferase (152 aa).

5-phospho-alpha-D-ribose 1-diphosphate contacts are provided by residues 37 to 38, R69, and 88 to 96; these read RG and DDLVDTGGT. R69 provides a ligand contact to GMP. Position 89 (D89) interacts with Mg(2+). Guanine-binding residues include D92 and I135. D92 and I135 together coordinate xanthine. GMP-binding positions include 92–96 and 134–135; these read DTGGT and WI.

The protein belongs to the purine/pyrimidine phosphoribosyltransferase family. XGPT subfamily. As to quaternary structure, homotetramer. Requires Mg(2+) as cofactor.

The protein localises to the cell inner membrane. It carries out the reaction GMP + diphosphate = guanine + 5-phospho-alpha-D-ribose 1-diphosphate. The enzyme catalyses XMP + diphosphate = xanthine + 5-phospho-alpha-D-ribose 1-diphosphate. It catalyses the reaction IMP + diphosphate = hypoxanthine + 5-phospho-alpha-D-ribose 1-diphosphate. It functions in the pathway purine metabolism; GMP biosynthesis via salvage pathway; GMP from guanine: step 1/1. Its pathway is purine metabolism; XMP biosynthesis via salvage pathway; XMP from xanthine: step 1/1. Its function is as follows. Purine salvage pathway enzyme that catalyzes the transfer of the ribosyl-5-phosphate group from 5-phospho-alpha-D-ribose 1-diphosphate (PRPP) to the N9 position of the 6-oxopurines guanine and xanthine to form the corresponding ribonucleotides GMP (guanosine 5'-monophosphate) and XMP (xanthosine 5'-monophosphate), with the release of PPi. To a lesser extent, also acts on hypoxanthine. This Shigella boydii serotype 18 (strain CDC 3083-94 / BS512) protein is Xanthine-guanine phosphoribosyltransferase.